The primary structure comprises 420 residues: rRNA methyltransferase 3, mitochondrial (420 aa).

The transit peptide at 1–40 (MAALVRPARFVVRPLLQVVQAWDLDARRWVRALRRSPVKV) directs the protein to the mitochondrion. The segment at 49–88 (EQKRAPGKQPRKAPSEASAQEQREKQPLEESASRAPSTWE) is disordered. Basic and acidic residues predominate over residues 69–80 (EQREKQPLEESA). The S-adenosyl-L-methionine site is built by G356, I380, and L389.

This sequence belongs to the class IV-like SAM-binding methyltransferase superfamily. RNA methyltransferase TrmH family. In terms of tissue distribution, expressed at same level in normal liver and hepatocarcinoma.

It localises to the mitochondrion. The enzyme catalyses guanosine(1370) in 16S rRNA + S-adenosyl-L-methionine = 2'-O-methylguanosine(1370) in 16S rRNA + S-adenosyl-L-homocysteine + H(+). S-adenosyl-L-methionine-dependent 2'-O-ribose methyltransferase that catalyzes the formation of 2'-O-methylguanosine at position 1370 (Gm1370) in the 16S mitochondrial large subunit ribosomal RNA (mtLSU rRNA), a conserved modification in the peptidyl transferase domain of the mtLSU rRNA. Also required for formation of 2'-O-methyluridine at position 1369 (Um1369) mediated by MRM2. This Homo sapiens (Human) protein is rRNA methyltransferase 3, mitochondrial.